Here is a 452-residue protein sequence, read N- to C-terminus: tRNA modification GTPase MnmE (452 aa).

Residues Arg21, Glu78, and Lys118 each contribute to the (6S)-5-formyl-5,6,7,8-tetrahydrofolate site. The TrmE-type G domain occupies 214–375; the sequence is GMKVVIAGRP…LREHLKQAMG (162 aa). Position 224 (Asn224) interacts with K(+). GTP contacts are provided by residues 224–229, 243–249, and 268–271; these read NAGKSS, TDIAGTT, and DTAG. Mg(2+) is bound at residue Ser228. K(+) is bound by residues Thr243, Ile245, and Thr248. Residue Thr249 coordinates Mg(2+). Residue Lys452 coordinates (6S)-5-formyl-5,6,7,8-tetrahydrofolate.

It belongs to the TRAFAC class TrmE-Era-EngA-EngB-Septin-like GTPase superfamily. TrmE GTPase family. Homodimer. Heterotetramer of two MnmE and two MnmG subunits. It depends on K(+) as a cofactor.

The protein localises to the cytoplasm. Exhibits a very high intrinsic GTPase hydrolysis rate. Involved in the addition of a carboxymethylaminomethyl (cmnm) group at the wobble position (U34) of certain tRNAs, forming tRNA-cmnm(5)s(2)U34. This chain is tRNA modification GTPase MnmE, found in Haemophilus influenzae (strain PittEE).